Reading from the N-terminus, the 375-residue chain is Succinyl-diaminopimelate desuccinylase (375 aa).

Residue His66 coordinates Zn(2+). Asp68 is a catalytic residue. Asp99 lines the Zn(2+) pocket. The active-site Proton acceptor is Glu133. Glu134, Glu162, and His348 together coordinate Zn(2+).

Belongs to the peptidase M20A family. DapE subfamily. Homodimer. Zn(2+) serves as cofactor. Requires Co(2+) as cofactor.

It carries out the reaction N-succinyl-(2S,6S)-2,6-diaminopimelate + H2O = (2S,6S)-2,6-diaminopimelate + succinate. It functions in the pathway amino-acid biosynthesis; L-lysine biosynthesis via DAP pathway; LL-2,6-diaminopimelate from (S)-tetrahydrodipicolinate (succinylase route): step 3/3. Catalyzes the hydrolysis of N-succinyl-L,L-diaminopimelic acid (SDAP), forming succinate and LL-2,6-diaminopimelate (DAP), an intermediate involved in the bacterial biosynthesis of lysine and meso-diaminopimelic acid, an essential component of bacterial cell walls. In Methylobacillus flagellatus (strain ATCC 51484 / DSM 6875 / VKM B-1610 / KT), this protein is Succinyl-diaminopimelate desuccinylase.